A 93-amino-acid polypeptide reads, in one-letter code: Integration host factor subunit beta (93 aa).

The protein belongs to the bacterial histone-like protein family. In terms of assembly, heterodimer of an alpha and a beta chain.

Its function is as follows. This protein is one of the two subunits of integration host factor, a specific DNA-binding protein that functions in genetic recombination as well as in transcriptional and translational control. The sequence is that of Integration host factor subunit beta from Actinobacillus pleuropneumoniae serotype 7 (strain AP76).